The following is a 549-amino-acid chain: ATP synthase subunit alpha (549 aa).

Gly172–Thr179 lines the ATP pocket.

Belongs to the ATPase alpha/beta chains family. In terms of assembly, F-type ATPases have 2 components, CF(1) - the catalytic core - and CF(0) - the membrane proton channel. CF(1) has five subunits: alpha(3), beta(3), gamma(1), delta(1), epsilon(1). CF(0) has three main subunits: a(1), b(2) and c(9-12). The alpha and beta chains form an alternating ring which encloses part of the gamma chain. CF(1) is attached to CF(0) by a central stalk formed by the gamma and epsilon chains, while a peripheral stalk is formed by the delta and b chains.

The protein localises to the cell membrane. It carries out the reaction ATP + H2O + 4 H(+)(in) = ADP + phosphate + 5 H(+)(out). In terms of biological role, produces ATP from ADP in the presence of a proton gradient across the membrane. The alpha chain is a regulatory subunit. In Mycobacterium tuberculosis (strain CDC 1551 / Oshkosh), this protein is ATP synthase subunit alpha.